Reading from the N-terminus, the 94-residue chain is Co-chaperonin GroES (94 aa).

The protein belongs to the GroES chaperonin family. In terms of assembly, heptamer of 7 subunits arranged in a ring. Interacts with the chaperonin GroEL.

It is found in the cytoplasm. Together with the chaperonin GroEL, plays an essential role in assisting protein folding. The GroEL-GroES system forms a nano-cage that allows encapsulation of the non-native substrate proteins and provides a physical environment optimized to promote and accelerate protein folding. GroES binds to the apical surface of the GroEL ring, thereby capping the opening of the GroEL channel. In Streptococcus agalactiae serotype III (strain NEM316), this protein is Co-chaperonin GroES.